Consider the following 689-residue polypeptide: Calcium-responsive transcription factor (689 aa).

Disordered stretches follow at residues 1–46 (MEQR…PTIL) and 541–609 (SPDG…SVPN). Basic and acidic residues predominate over residues 13–29 (DGEKSEREAQGFEHRTC). Composition is skewed to polar residues over residues 541–559 (SPDGSQALVSVDSHASSSP) and 578–601 (LGQSQNPGTDTCLTQDNSTSSSTG).

In terms of tissue distribution, highly expressed in brain and testis.

The protein localises to the nucleus. Acts as a transcriptional activator that mediates the calcium- and neuron-selective induction of BDNF exon III transcription. Binds to the consensus calcium-response element CaRE1 5'-CTATTTCGAG-3' sequence. This is Calcium-responsive transcription factor (Carf) from Mus musculus (Mouse).